Here is a 380-residue protein sequence, read N- to C-terminus: 4-hydroxy-3-methylbut-2-en-1-yl diphosphate synthase (flavodoxin) (380 aa).

[4Fe-4S] cluster is bound by residues Cys-273, Cys-276, Cys-308, and Glu-315.

Belongs to the IspG family. Requires [4Fe-4S] cluster as cofactor.

It catalyses the reaction (2E)-4-hydroxy-3-methylbut-2-enyl diphosphate + oxidized [flavodoxin] + H2O + 2 H(+) = 2-C-methyl-D-erythritol 2,4-cyclic diphosphate + reduced [flavodoxin]. It participates in isoprenoid biosynthesis; isopentenyl diphosphate biosynthesis via DXP pathway; isopentenyl diphosphate from 1-deoxy-D-xylulose 5-phosphate: step 5/6. Functionally, converts 2C-methyl-D-erythritol 2,4-cyclodiphosphate (ME-2,4cPP) into 1-hydroxy-2-methyl-2-(E)-butenyl 4-diphosphate. The chain is 4-hydroxy-3-methylbut-2-en-1-yl diphosphate synthase (flavodoxin) from Leifsonia xyli subsp. xyli (strain CTCB07).